We begin with the raw amino-acid sequence, 387 residues long: Alkanesulfonate monooxygenase (387 aa).

Belongs to the SsuD family.

The enzyme catalyses an alkanesulfonate + FMNH2 + O2 = an aldehyde + FMN + sulfite + H2O + 2 H(+). Functionally, catalyzes the desulfonation of aliphatic sulfonates. The sequence is that of Alkanesulfonate monooxygenase from Ralstonia pickettii (strain 12J).